The following is a 505-amino-acid chain: Putative pentatricopeptide repeat-containing protein At1g26500 (505 aa).

PPR repeat units lie at residues 145–179, 180–210, 214–248, 249–279, 285–319, 320–350, and 351–385; these read NDKTFRIVLKTLASARELKKCVNYFHLMNGFGYLY, NVETMNRGVETLCKEKLVEEAKFVFIKLKEF, DEITYRTMIQGFCDVGDLIEAAKLWNLMMDEGFDV, DIEAGKKIMETLLKKNQFDEASKVFYVMVSK, DGGFYRVMIDWLCKNGRIDMARKVFDEMRERGVYV, DNLTWASLIYGLLVKRRVVEAYGLVEGVENP, and DISIYHGLIKGLVKIKRASEATEVFRKMIQRGCEP.

The protein belongs to the PPR family. P subfamily.

The protein is Putative pentatricopeptide repeat-containing protein At1g26500 of Arabidopsis thaliana (Mouse-ear cress).